The sequence spans 525 residues: Bifunctional purine biosynthesis protein PurH (525 aa).

In terms of domain architecture, MGS-like spans 1–145; it reads MSNVERALIS…KNNASVGIVT (145 aa).

Belongs to the PurH family.

The catalysed reaction is (6R)-10-formyltetrahydrofolate + 5-amino-1-(5-phospho-beta-D-ribosyl)imidazole-4-carboxamide = 5-formamido-1-(5-phospho-D-ribosyl)imidazole-4-carboxamide + (6S)-5,6,7,8-tetrahydrofolate. It carries out the reaction IMP + H2O = 5-formamido-1-(5-phospho-D-ribosyl)imidazole-4-carboxamide. Its pathway is purine metabolism; IMP biosynthesis via de novo pathway; 5-formamido-1-(5-phospho-D-ribosyl)imidazole-4-carboxamide from 5-amino-1-(5-phospho-D-ribosyl)imidazole-4-carboxamide (10-formyl THF route): step 1/1. It participates in purine metabolism; IMP biosynthesis via de novo pathway; IMP from 5-formamido-1-(5-phospho-D-ribosyl)imidazole-4-carboxamide: step 1/1. The protein is Bifunctional purine biosynthesis protein PurH of Alcanivorax borkumensis (strain ATCC 700651 / DSM 11573 / NCIMB 13689 / SK2).